We begin with the raw amino-acid sequence, 346 residues long: uncharacterized protein (346 aa).

A signal peptide spans 1 to 28 (MFEWMKNKKAISPILALLIVLGVTIVVG).

This is an uncharacterized protein from Methanocaldococcus jannaschii (strain ATCC 43067 / DSM 2661 / JAL-1 / JCM 10045 / NBRC 100440) (Methanococcus jannaschii).